A 343-amino-acid polypeptide reads, in one-letter code: Zinc finger protein STP3 (343 aa).

Disordered regions lie at residues 31–56 (YNGE…SGSA) and 71–140 (SNDV…KPRK). Over residues 33–45 (GEASSASTHPTLP) the composition is skewed to polar residues. Composition is skewed to low complexity over residues 46-56 (NMNISNGSGSA), 71-86 (SNDV…FLPS), and 94-120 (SASA…AGPS). S71 and S111 each carry phosphoserine. The C2H2-type zinc-finger motif lies at 169 to 191 (HKCPICHRGFARNNDLLRHKKRH). The segment at 198 to 222 (SQSGVLSNHNDGKGGSVSPNDDDTH) is disordered.

Its subcellular location is the nucleus. This Saccharomyces cerevisiae (strain ATCC 204508 / S288c) (Baker's yeast) protein is Zinc finger protein STP3 (STP3).